We begin with the raw amino-acid sequence, 239 residues long: Probable transcriptional regulatory protein RBAM_007230 (239 aa).

This sequence belongs to the TACO1 family. YeeN subfamily.

The protein resides in the cytoplasm. The chain is Probable transcriptional regulatory protein RBAM_007230 from Bacillus velezensis (strain DSM 23117 / BGSC 10A6 / LMG 26770 / FZB42) (Bacillus amyloliquefaciens subsp. plantarum).